Here is a 1077-residue protein sequence, read N- to C-terminus: Adenylate cyclase type 4 (1077 aa).

The Cytoplasmic segment spans residues 1 to 28; the sequence is MARLFSPRPPPSEDLFYETYYSLSQQYP. 6 helical membrane-spanning segments follow: residues 29 to 50, 61 to 80, 94 to 117, 120 to 138, 141 to 162, and 170 to 190; these read LLIL…VAWA, FLTT…GLAS, GLIW…VSAW, VSFF…PLGM, AAAA…YLGW, and LLPQ…VGAY. Residues 191-582 lie on the Cytoplasmic side of the membrane; it reads HKALMERALR…YRLSALPAFK (392 aa). Aspartate 278, isoleucine 279, and aspartate 322 together coordinate Mg(2+). Residues 278-283, 320-322, and arginine 366 contribute to the ATP site; these read DIVGFT and LGD. The segment at 503–524 is disordered; that stretch reads TSTPLPEKAFSPQWSLDRSRTP. The residue at position 517 (serine 517) is a Phosphoserine. Threonine 533 is modified (phosphothreonine). The next 3 membrane-spanning stretches (helical) occupy residues 583-604, 608-630, and 661-684; these read YYAA…LVTT, ALII…CFSE, and VALG…FLPV. Residues 685-717 are Extracellular-facing; it reads SSDCLFLASNVSSVTFNASWEMPGSLPLISIPL. Residues asparagine 694 and asparagine 701 are each glycosylated (N-linked (GlcNAc...) asparagine). Transmembrane regions (helical) follow at residues 718 to 738, 746 to 766, and 793 to 809; these read ISIP…SLFL, LLLL…SHAW, and MGAI…LVLA. Topologically, residues 810–1077 are cytoplasmic; it reads RQNEYYCRLD…LTRTGSPSAS (268 aa). ATP contacts are provided by residues lysine 927, 1007 to 1009, 1014 to 1018, and lysine 1054; these read DIW and NVASR.

It belongs to the adenylyl cyclase class-4/guanylyl cyclase family. It depends on Mg(2+) as a cofactor. Mn(2+) is required as a cofactor.

Its subcellular location is the cell membrane. The protein resides in the cytoplasm. It carries out the reaction ATP = 3',5'-cyclic AMP + diphosphate. Activated by forskolin. Insensitive to calcium/calmodulin. Stimulated by GNAS and by the G-protein beta and gamma subunit complex. Catalyzes the formation of the signaling molecule cAMP in response to G-protein signaling. The sequence is that of Adenylate cyclase type 4 (Adcy4) from Mus musculus (Mouse).